We begin with the raw amino-acid sequence, 700 residues long: Phosphoribosylformylglycinamidine synthase subunit PurL (700 aa).

Histidine 34 is a catalytic residue. Tyrosine 37 provides a ligand contact to ATP. Glutamate 79 is a Mg(2+) binding site. Residues serine 80 to histidine 83 and arginine 102 each bind substrate. Catalysis depends on histidine 81, which acts as the Proton acceptor. Aspartate 103 contributes to the Mg(2+) binding site. Glutamine 227 contacts substrate. Aspartate 255 contacts Mg(2+). A substrate-binding site is contributed by glutamate 299–glutamine 301. Positions 476 and 513 each coordinate ATP. Asparagine 514 is a Mg(2+) binding site. Serine 516 contacts substrate.

The protein belongs to the FGAMS family. Monomer. Part of the FGAM synthase complex composed of 1 PurL, 1 PurQ and 2 PurS subunits.

It is found in the cytoplasm. It carries out the reaction N(2)-formyl-N(1)-(5-phospho-beta-D-ribosyl)glycinamide + L-glutamine + ATP + H2O = 2-formamido-N(1)-(5-O-phospho-beta-D-ribosyl)acetamidine + L-glutamate + ADP + phosphate + H(+). Its pathway is purine metabolism; IMP biosynthesis via de novo pathway; 5-amino-1-(5-phospho-D-ribosyl)imidazole from N(2)-formyl-N(1)-(5-phospho-D-ribosyl)glycinamide: step 1/2. Functionally, part of the phosphoribosylformylglycinamidine synthase complex involved in the purines biosynthetic pathway. Catalyzes the ATP-dependent conversion of formylglycinamide ribonucleotide (FGAR) and glutamine to yield formylglycinamidine ribonucleotide (FGAM) and glutamate. The FGAM synthase complex is composed of three subunits. PurQ produces an ammonia molecule by converting glutamine to glutamate. PurL transfers the ammonia molecule to FGAR to form FGAM in an ATP-dependent manner. PurS interacts with PurQ and PurL and is thought to assist in the transfer of the ammonia molecule from PurQ to PurL. This is Phosphoribosylformylglycinamidine synthase subunit PurL from Halobacterium salinarum (strain ATCC 29341 / DSM 671 / R1).